Here is a 360-residue protein sequence, read N- to C-terminus: Popeye domain-containing protein 1 (360 aa).

Over 1-48 (MNYTESSPLRESTAIGFTPELESIIPVPSNKTTCENWREIHHLVFHVA) the chain is Extracellular. N-linked (GlcNAc...) asparagine glycosylation is found at Asn2 and Asn30. The chain crosses the membrane as a helical span at residues 49–69 (NICFAVGLVIPTTLHLHMIFL). A topological domain (cytoplasmic) is located at residue Arg70. Residues 71–91 (GMLTLGCTLYIVWATLYRCAL) form a helical membrane-spanning segment. Position 92 (Asp92) is a topological domain, extracellular. A helical membrane pass occupies residues 93–113 (IMIWNSVFLGVNILHLSYLLY). Residues 93 to 115 (IMIWNSVFLGVNILHLSYLLYKK) are required for interaction with CAV3. Over 114–360 (KKRPVKIEKE…PNTLKVHQLP (247 aa)) the chain is Cytoplasmic. Residues 136 to 186 (RVPPDLFRRLTGQFCMIQTLKKGQTYAAEDKTSVDDRLSILLKGKMKVSYR) form a required for interaction with KCNK2 region. A phosphoserine mark is found at Ser295 and Ser318. Residues 317 to 360 (SSLHVSSPHQRASAKMKPIEEGAEDDDDVFEPASPNTLKVHQLP) are disordered. The span at 337 to 346 (EGAEDDDDVF) shows a compositional bias: acidic residues. Residues 350–360 (SPNTLKVHQLP) are compositionally biased toward polar residues.

This sequence belongs to the popeye family. Homodimer. Homodimerization requires the C-terminus cytoplasmic region. Interacts (via the C-terminus cytoplasmic tail) with TJP1. Interacts (via the C-terminus cytoplasmic tail) with ARHGEF25/GEFT (via the DH domain). Interacts (via the C-terminus cytoplasmic tail) with VAMP3. Interacts with KCNK2; the interaction enhances KCNK2 surface expression and is inhibited by cAMP. Interacts with CAV3. As to expression, expressed in epithelial cells (at protein level). Expressed in fetal and adult heart and skeletal muscle.

It is found in the lateral cell membrane. The protein resides in the cell junction. It localises to the tight junction. The protein localises to the membrane. Its subcellular location is the cell membrane. It is found in the sarcolemma. The protein resides in the caveola. Functionally, cell adhesion molecule involved in the establishment and/or maintenance of cell integrity. Involved in the formation and regulation of the tight junction (TJ) paracellular permeability barrier in epithelial cells. Plays a role in VAMP3-mediated vesicular transport and recycling of different receptor molecules through its interaction with VAMP3. Plays a role in the regulation of cell shape and movement by modulating the Rho-family GTPase activity through its interaction with ARHGEF25/GEFT. Induces primordial adhesive contact and aggregation of epithelial cells in a Ca(2+)-independent manner. Also involved in striated muscle regeneration and repair and in the regulation of cell spreading. Important for the maintenance of cardiac function. Plays a regulatory function in heart rate dynamics mediated, at least in part, through cAMP-binding and, probably, by increasing cell surface expression of the potassium channel KCNK2 and enhancing current density. Is also a caveolae-associated protein important for the preservation of caveolae structural and functional integrity as well as for heart protection against ischemia injury. This chain is Popeye domain-containing protein 1, found in Homo sapiens (Human).